The sequence spans 261 residues: Bcl-2-binding component 3, isoforms 3/4 (261 aa).

The interval 27 to 261 is disordered; the sequence is QICGPRERHG…ASAGDFLCTM (235 aa). Residues 40–50 are compositionally biased toward low complexity; the sequence is PGGQLPGARRG. Positions 53-63 are enriched in pro residues; that stretch reads PRRPAPLPARP. Low complexity predominate over residues 64 to 73; the sequence is PGALGSVLRP. Basic residues-rich tracts occupy residues 74 to 87 and 95 to 106; these read LRAR…RPHP and RPHRPTRRHRRP. Over residues 124–146 the composition is skewed to low complexity; sequence PGRSSALALAGGAAPGVARAQRP. The span at 147-171 shows a compositional bias: gly residues; that stretch reads GGSGGRSHPGGPGSPRGGGTVGPGD. A compositionally biased stretch (low complexity) spans 172 to 197; that stretch reads RGPAAADGGRPQRTVRAAETRGAAAA.

As to quaternary structure, does not interact with BCL2.

Its function is as follows. Does not affect cell growth. The sequence is that of Bcl-2-binding component 3, isoforms 3/4 (BBC3) from Homo sapiens (Human).